Here is a 400-residue protein sequence, read N- to C-terminus: NADH-quinone oxidoreductase subunit D (400 aa).

It belongs to the complex I 49 kDa subunit family. NDH-1 is composed of 14 different subunits. Subunits NuoB, C, D, E, F, and G constitute the peripheral sector of the complex.

The protein resides in the cell inner membrane. The enzyme catalyses a quinone + NADH + 5 H(+)(in) = a quinol + NAD(+) + 4 H(+)(out). Its function is as follows. NDH-1 shuttles electrons from NADH, via FMN and iron-sulfur (Fe-S) centers, to quinones in the respiratory chain. The immediate electron acceptor for the enzyme in this species is believed to be ubiquinone. Couples the redox reaction to proton translocation (for every two electrons transferred, four hydrogen ions are translocated across the cytoplasmic membrane), and thus conserves the redox energy in a proton gradient. The chain is NADH-quinone oxidoreductase subunit D from Granulibacter bethesdensis (strain ATCC BAA-1260 / CGDNIH1).